Consider the following 407-residue polypeptide: Na(+)-translocating NADH-quinone reductase subunit F (407 aa).

Residues 3-23 (IILGVVMFTLIVLALVLVILF) traverse the membrane as a helical segment. Positions 32 to 126 (GDITISINGD…DMDIELPEEI (95 aa)) constitute a 2Fe-2S ferredoxin-type domain. 4 residues coordinate [2Fe-2S] cluster: Cys-69, Cys-75, Cys-78, and Cys-110. In terms of domain architecture, FAD-binding FR-type spans 129–269 (VKKWECTVIS…SGPFGEFFAK (141 aa)). The tract at residues 272 to 389 (DAEMVFIGGG…PMMNAAVIGM (118 aa)) is catalytic.

Belongs to the NqrF family. In terms of assembly, composed of six subunits; NqrA, NqrB, NqrC, NqrD, NqrE and NqrF. The cofactor is [2Fe-2S] cluster. FAD serves as cofactor.

It is found in the cell inner membrane. The catalysed reaction is a ubiquinone + n Na(+)(in) + NADH + H(+) = a ubiquinol + n Na(+)(out) + NAD(+). NQR complex catalyzes the reduction of ubiquinone-1 to ubiquinol by two successive reactions, coupled with the transport of Na(+) ions from the cytoplasm to the periplasm. The first step is catalyzed by NqrF, which accepts electrons from NADH and reduces ubiquinone-1 to ubisemiquinone by a one-electron transfer pathway. The chain is Na(+)-translocating NADH-quinone reductase subunit F from Vibrio anguillarum (Listonella anguillarum).